The following is a 291-amino-acid chain: Beta-lactamase CTX-M-6 (291 aa).

A signal peptide spans 1–28 (MMTQSIRRSMLTVMATLPLLFSSATLHA). Serine 73 serves as the catalytic Acyl-ester intermediate. A substrate-binding site is contributed by 237-239 (KTG).

It belongs to the class-A beta-lactamase family.

The catalysed reaction is a beta-lactam + H2O = a substituted beta-amino acid. Its function is as follows. Has cefotaxime-hydrolyzing activity. The protein is Beta-lactamase CTX-M-6 (bla) of Salmonella typhimurium.